Consider the following 351-residue polypeptide: Peroxidase C1B (351 aa).

Positions 1 to 28 (MHSPSSTSFTWILITLGCLAFYASLSDA) are cleaved as a signal peptide. Intrachain disulfides connect Cys-39–Cys-119, Cys-72–Cys-77, Cys-125–Cys-329, and Cys-205–Cys-237. An N-linked (GlcNAc...) asparagine glycan is attached at Asn-41. Residue His-70 is the Proton acceptor of the active site. Residues Asp-71, Val-74, Gly-76, Asp-78, and Ser-80 each coordinate Ca(2+). An N-linked (GlcNAc...) asparagine glycan is attached at Asn-85. Pro-167 provides a ligand contact to substrate. Position 198 (His-198) interacts with heme b. Thr-199 contributes to the Ca(2+) binding site. N-linked (GlcNAc...) asparagine glycosylation is found at Asn-214, Asn-226, and Asn-242. The Ca(2+) site is built by Asp-250, Thr-253, and Asp-258. Asn-283 is a glycosylation site (N-linked (GlcNAc...) asparagine).

This sequence belongs to the peroxidase family. Classical plant (class III) peroxidase subfamily. Ca(2+) serves as cofactor. It depends on heme b as a cofactor.

The protein localises to the secreted. Its subcellular location is the vacuole. It catalyses the reaction 2 a phenolic donor + H2O2 = 2 a phenolic radical donor + 2 H2O. Functionally, removal of H(2)O(2), oxidation of toxic reductants, biosynthesis and degradation of lignin, suberization, auxin catabolism, response to environmental stresses such as wounding, pathogen attack and oxidative stress. These functions might be dependent on each isozyme/isoform in each plant tissue. The protein is Peroxidase C1B (PRXC1B) of Armoracia rusticana (Horseradish).